A 225-amino-acid polypeptide reads, in one-letter code: Ethylene-responsive transcription factor 3 (225 aa).

The span at 1 to 12 shows a compositional bias: low complexity; the sequence is MRRGRAAAAPAP. 2 disordered regions span residues 1–29 and 82–193; these read MRRG…IRFR and NFPL…NIAS. Residues 27-84 constitute a DNA-binding region (AP2/ERF); that stretch reads RFRGVRKRPWGRFAAEIRDPWKKTRVWLGTFDSAEDAARAYDAAARALRGPKAKTNFP. A compositionally biased stretch (low complexity) spans 118 to 134; it reads SQRPTSSSMSSTVESFS. Positions 176 to 185 are enriched in basic and acidic residues; that stretch reads DHGDCEKEND. The EAR-like (transcriptional repression) signature appears at 202–208; that stretch reads FDLNLPP.

Belongs to the ethylene-response factor family. Class 2 subfamily.

The protein localises to the nucleus. Transcription factor that binds to the GCC-box pathogenesis-related promoter element. Involved in the regulation of gene expression by stress factors and by components of stress signal transduction pathways. Probably acts as a transcriptional repressor and may regulate other AtERFs. This is Ethylene-responsive transcription factor 3 (ERF3) from Nicotiana tabacum (Common tobacco).